The sequence spans 349 residues: Hydroxymethylglutaryl-CoA synthase (349 aa).

Residues Asp30 and Ala31 each coordinate (3S)-3-hydroxy-3-methylglutaryl-CoA. Glu82 functions as the Proton donor/acceptor in the catalytic mechanism. (3S)-3-hydroxy-3-methylglutaryl-CoA is bound by residues Cys114 and Thr155. Cys114 acts as the Acyl-thioester intermediate in catalysis. Position 203 (Arg203) interacts with CoA. Positions 205 and 238 each coordinate (3S)-3-hydroxy-3-methylglutaryl-CoA. The active-site Proton donor/acceptor is His238. Residue Lys243 participates in CoA binding. The (3S)-3-hydroxy-3-methylglutaryl-CoA site is built by Asn270 and Ser300.

It belongs to the thiolase-like superfamily. Archaeal HMG-CoA synthase family. As to quaternary structure, interacts with acetoacetyl-CoA thiolase that catalyzes the precedent step in the pathway and with a DUF35 protein. The acetoacetyl-CoA thiolase/HMG-CoA synthase complex channels the intermediate via a fused CoA-binding site, which allows for efficient coupling of the endergonic thiolase reaction with the exergonic HMGCS reaction.

It carries out the reaction acetoacetyl-CoA + acetyl-CoA + H2O = (3S)-3-hydroxy-3-methylglutaryl-CoA + CoA + H(+). It functions in the pathway metabolic intermediate biosynthesis; (R)-mevalonate biosynthesis; (R)-mevalonate from acetyl-CoA: step 2/3. Functionally, catalyzes the condensation of acetyl-CoA with acetoacetyl-CoA to form 3-hydroxy-3-methylglutaryl-CoA (HMG-CoA). Functions in the mevalonate (MVA) pathway leading to isopentenyl diphosphate (IPP), a key precursor for the biosynthesis of isoprenoid compounds that are building blocks of archaeal membrane lipids. This Methanococcus vannielii (strain ATCC 35089 / DSM 1224 / JCM 13029 / OCM 148 / SB) protein is Hydroxymethylglutaryl-CoA synthase.